A 388-amino-acid polypeptide reads, in one-letter code: 3-amino-5-hydroxybenzoate synthase (388 aa).

Lys-188 is subject to N6-(pyridoxal phosphate)lysine.

Belongs to the degT/dnrJ/eryC1 family. As to quaternary structure, homodimer. Can interact with RifL. Pyridoxal 5'-phosphate is required as a cofactor.

The catalysed reaction is 5-deoxy-5-amino-3-dehydroshikimate = 3-amino-5-hydroxybenzoate + H2O + H(+). The enzyme catalyses UDP-3-oxo-alpha-D-glucose + L-glutamine = UDP-alpha-D-kanosamine + 2-oxoglutaramate. Its pathway is antibiotic biosynthesis; rifamycin B biosynthesis. With respect to regulation, AHBA synthase activity is activated by 3-deoxy-D-arabinoheptulosonic acid 7-phosphate (DAHP), an intermediate in the shikimate pathway, and is irreversibly inhibited by gabaculine (5-amino-1,3-cyclohexadiene-1-carboxylate). Catalyzes the dehydration and aromatization of 5-amino-5-deoxy-3-dehydroshikimate (aminoDHS) to 3-amino-5-hydroxybenzoate (AHBA), a compound that then serves as the starter unit for the assembly of a polyketide during the biosynthesis of rifamycin B and other ansamycin antibiotics. Cannot utilize 5-deoxy-5-amino-3-dehydroquinate (aminoDHQ), 5-deoxy-5-aminoshikimate (aminoSA), quinate, 3-dehydroquinate, or 3-dehydroshikimate (DHS) as substrate. Functionally, in a complex with RifL, RifK may have a second function in the AHBA pathway, acting as a transaminase introducing the nitrogen into the first pathway intermediate, UDP-3-keto-D-glucose, to give UDP-kanosamine. Appears to use glutamine as the nitrogen donor; NH(4)(+) or asparagine are 30% less effective as nitrogen donors and neither glutamate nor aspartate show activity. The chain is 3-amino-5-hydroxybenzoate synthase (rifK) from Amycolatopsis mediterranei (strain S699) (Nocardia mediterranei).